A 195-amino-acid polypeptide reads, in one-letter code: Peptide methionine sulfoxide reductase MsrA 2 (195 aa).

The active site involves Cys18.

This sequence belongs to the MsrA Met sulfoxide reductase family.

It carries out the reaction L-methionyl-[protein] + [thioredoxin]-disulfide + H2O = L-methionyl-(S)-S-oxide-[protein] + [thioredoxin]-dithiol. The catalysed reaction is [thioredoxin]-disulfide + L-methionine + H2O = L-methionine (S)-S-oxide + [thioredoxin]-dithiol. In terms of biological role, has an important function as a repair enzyme for proteins that have been inactivated by oxidation. Catalyzes the reversible oxidation-reduction of methionine sulfoxide in proteins to methionine. This Mesorhizobium japonicum (strain LMG 29417 / CECT 9101 / MAFF 303099) (Mesorhizobium loti (strain MAFF 303099)) protein is Peptide methionine sulfoxide reductase MsrA 2 (msrA2).